The following is a 211-amino-acid chain: Uracil phosphoribosyltransferase (211 aa).

Residues Arg79, Arg104, and 131–139 (DPMLATGGS) contribute to the 5-phospho-alpha-D-ribose 1-diphosphate site. Uracil-binding positions include Ile196 and 201 to 203 (GDA). Residue Asp202 coordinates 5-phospho-alpha-D-ribose 1-diphosphate.

This sequence belongs to the UPRTase family. It depends on Mg(2+) as a cofactor.

It catalyses the reaction UMP + diphosphate = 5-phospho-alpha-D-ribose 1-diphosphate + uracil. It participates in pyrimidine metabolism; UMP biosynthesis via salvage pathway; UMP from uracil: step 1/1. Its activity is regulated as follows. Allosterically activated by GTP. Functionally, catalyzes the conversion of uracil and 5-phospho-alpha-D-ribose 1-diphosphate (PRPP) to UMP and diphosphate. This Lactococcus lactis subsp. cremoris (strain SK11) protein is Uracil phosphoribosyltransferase.